Here is a 399-residue protein sequence, read N- to C-terminus: Phosphoglycerate kinase (399 aa).

Substrate-binding positions include 22-24 (DFN), R38, 61-64 (HLGR), R120, and R153. ATP contacts are provided by residues K204, E326, and 352–355 (GGDT).

It belongs to the phosphoglycerate kinase family. Monomer.

The protein resides in the cytoplasm. It catalyses the reaction (2R)-3-phosphoglycerate + ATP = (2R)-3-phospho-glyceroyl phosphate + ADP. The protein operates within carbohydrate degradation; glycolysis; pyruvate from D-glyceraldehyde 3-phosphate: step 2/5. The polypeptide is Phosphoglycerate kinase (Geotalea uraniireducens (strain Rf4) (Geobacter uraniireducens)).